The following is a 183-amino-acid chain: MADMKSIQADTREKMNKAIEAFENNLSVLRTGRANPGILKKIVVDYYGSQMPIDQVASITTPDPRTLVITPWDRGALNPIEKAIRDSDLGLNPNNKGDTIFISLPMLTEERRKDLVKNAKNYAEDARIAVRNLRKHALDEVKKVEGLGEDEIKRGEADVQKITDEYVARVESVFQKKEQEILG.

Belongs to the RRF family.

Its subcellular location is the cytoplasm. In terms of biological role, responsible for the release of ribosomes from messenger RNA at the termination of protein biosynthesis. May increase the efficiency of translation by recycling ribosomes from one round of translation to another. This Deinococcus radiodurans (strain ATCC 13939 / DSM 20539 / JCM 16871 / CCUG 27074 / LMG 4051 / NBRC 15346 / NCIMB 9279 / VKM B-1422 / R1) protein is Ribosome-recycling factor.